A 483-amino-acid polypeptide reads, in one-letter code: Protein nucleotidyltransferase YdiU (483 aa).

8 residues coordinate ATP: glycine 87, glycine 89, arginine 90, lysine 110, aspartate 122, glycine 123, arginine 173, and arginine 180. Aspartate 249 (proton acceptor) is an active-site residue. Positions 250 and 259 each coordinate Mg(2+). Aspartate 259 is an ATP binding site.

This sequence belongs to the SELO family. Requires Mg(2+) as cofactor. Mn(2+) serves as cofactor.

It catalyses the reaction L-seryl-[protein] + ATP = 3-O-(5'-adenylyl)-L-seryl-[protein] + diphosphate. The catalysed reaction is L-threonyl-[protein] + ATP = 3-O-(5'-adenylyl)-L-threonyl-[protein] + diphosphate. The enzyme catalyses L-tyrosyl-[protein] + ATP = O-(5'-adenylyl)-L-tyrosyl-[protein] + diphosphate. It carries out the reaction L-histidyl-[protein] + UTP = N(tele)-(5'-uridylyl)-L-histidyl-[protein] + diphosphate. It catalyses the reaction L-seryl-[protein] + UTP = O-(5'-uridylyl)-L-seryl-[protein] + diphosphate. The catalysed reaction is L-tyrosyl-[protein] + UTP = O-(5'-uridylyl)-L-tyrosyl-[protein] + diphosphate. In terms of biological role, nucleotidyltransferase involved in the post-translational modification of proteins. It can catalyze the addition of adenosine monophosphate (AMP) or uridine monophosphate (UMP) to a protein, resulting in modifications known as AMPylation and UMPylation. This chain is Protein nucleotidyltransferase YdiU, found in Pelagibacter ubique (strain HTCC1062).